We begin with the raw amino-acid sequence, 318 residues long: Ribosomal RNA small subunit methyltransferase A (318 aa).

Residues Asn-40, Val-42, Gly-67, Glu-88, Asp-118, and Asn-137 each coordinate S-adenosyl-L-methionine. Positions 295-305 are enriched in basic and acidic residues; that stretch reads SADRGGTDREG. Residues 295–318 are disordered; sequence SADRGGTDREGTSPPTAGQGAPAR.

Belongs to the class I-like SAM-binding methyltransferase superfamily. rRNA adenine N(6)-methyltransferase family. RsmA subfamily.

The protein resides in the cytoplasm. The catalysed reaction is adenosine(1518)/adenosine(1519) in 16S rRNA + 4 S-adenosyl-L-methionine = N(6)-dimethyladenosine(1518)/N(6)-dimethyladenosine(1519) in 16S rRNA + 4 S-adenosyl-L-homocysteine + 4 H(+). Functionally, specifically dimethylates two adjacent adenosines (A1518 and A1519) in the loop of a conserved hairpin near the 3'-end of 16S rRNA in the 30S particle. May play a critical role in biogenesis of 30S subunits. The protein is Ribosomal RNA small subunit methyltransferase A of Mycolicibacterium paratuberculosis (strain ATCC BAA-968 / K-10) (Mycobacterium paratuberculosis).